Here is a 185-residue protein sequence, read N- to C-terminus: Imidazoleglycerol-phosphate dehydratase (185 aa).

The protein belongs to the imidazoleglycerol-phosphate dehydratase family.

The protein resides in the cytoplasm. It carries out the reaction D-erythro-1-(imidazol-4-yl)glycerol 3-phosphate = 3-(imidazol-4-yl)-2-oxopropyl phosphate + H2O. The protein operates within amino-acid biosynthesis; L-histidine biosynthesis; L-histidine from 5-phospho-alpha-D-ribose 1-diphosphate: step 6/9. In Pyrobaculum arsenaticum (strain DSM 13514 / JCM 11321 / PZ6), this protein is Imidazoleglycerol-phosphate dehydratase.